Consider the following 868-residue polypeptide: Leucine--tRNA ligase (868 aa).

The short motif at 42-52 (PYPSGKLHMGH) is the 'HIGH' region element. A 'KMSKS' region motif is present at residues 627–631 (KMSKS). Residue lysine 630 coordinates ATP.

The protein belongs to the class-I aminoacyl-tRNA synthetase family.

The protein resides in the cytoplasm. The enzyme catalyses tRNA(Leu) + L-leucine + ATP = L-leucyl-tRNA(Leu) + AMP + diphosphate. This chain is Leucine--tRNA ligase, found in Pseudomonas savastanoi pv. phaseolicola (strain 1448A / Race 6) (Pseudomonas syringae pv. phaseolicola (strain 1448A / Race 6)).